The following is a 485-amino-acid chain: Tektin-5 (485 aa).

4 coiled-coil regions span residues 113–185 (SRLT…EVNC), 225–251 (QQQM…ALER), 342–385 (FNAR…MAKE), and 423–443 (DDTL…LQLL).

Belongs to the tektin family. As to quaternary structure, microtubule inner protein component of sperm flagellar doublet microtubules. Interacts with TEKT3. Post-translationally, ubiquitinated, leading to its degradation. Deubiquitinated by USP16, promoting its stability.

It is found in the cytoplasm. Its subcellular location is the cytoskeleton. It localises to the flagellum axoneme. Its function is as follows. Sperm-specific microtubule inner protein (MIP) part of the dynein-decorated doublet microtubules (DMTs) in flagellar axoneme. Forms an extensive interaction network in different conformations that reinforces the helix bundle composed by other tektin proteins (TEKT1 to TEKT4) and MIPs to anchor the tektin bundle onto the tubulin wall of A-tubule of the sperm flagellum. This chain is Tektin-5 (TEKT5), found in Macaca fascicularis (Crab-eating macaque).